We begin with the raw amino-acid sequence, 102 residues long: YcgL domain-containing protein MS1047 (102 aa).

The 85-residue stretch at 1 to 85 (MLCAIYKSKK…KQESLFEQFK (85 aa)) folds into the YcgL domain.

The polypeptide is YcgL domain-containing protein MS1047 (Mannheimia succiniciproducens (strain KCTC 0769BP / MBEL55E)).